The chain runs to 560 residues: MSATASTATQPKPLEWLNRLRANPRIPLIVAGSAAVAIVVAMVLWAKTPDYRTLFSNLSDQDGGAIVAQLTQMNIPYRFANGSGAIEVPADKVHELRLRLAQQGLPKGGAVGFELLDQEKFGISQFSEQVNYQRALEGELARTIETLGPVKSARVHLAMPKPSLFVREQKSPSASVTVTLEPGRALDEGQISAVVHLVSSAVAGLPPGNVTLVDQSGHLLTQSNTSGRDLNDAQLKFANDVESRIQRRIEAILSPIVGNGNVHAQVTAQLDFANKEQTEEHYSPNGDASKATLRSRQLNISEQVGAGYPGGVPGALSNQPAPPNEAPIATPPTNQQNAQNTPQTSTSTNSNSAGPRSTQRNETSNYEVDRTIRHTKMNVGDIERLSVAVVVNYKTLADGKPLPLTADQMKQIEDLTREAMGFSDKRGDTLNVVNSPFSAVDNTGGELPFWQQQSFIDQLLAAGRWLLVLVVAWILWRKAVRPQLTRRVEEAKAAQEQAQVRQETEEAVEVRLSKDEQLQQRRANQRLGAEVMSQRIREMSDNDPRVVALVIRQWMSNDHE.

Residues 26-46 form a helical membrane-spanning segment; the sequence is IPLIVAGSAAVAIVVAMVLWA. Residues 304–372 form a disordered region; that stretch reads VGAGYPGGVP…TSNYEVDRTI (69 aa). Over residues 331–353 the composition is skewed to low complexity; the sequence is PPTNQQNAQNTPQTSTSTNSNSA. Positions 354-366 are enriched in polar residues; that stretch reads GPRSTQRNETSNY. Residues 455 to 475 form a helical membrane-spanning segment; the sequence is FIDQLLAAGRWLLVLVVAWIL.

The protein belongs to the FliF family. In terms of assembly, the basal body constitutes a major portion of the flagellar organelle and consists of four rings (L,P,S, and M) mounted on a central rod. The M ring is integral to the inner membrane of the cell and may be connected to the flagellar rod via the S ring. The S (supramembrane ring) lies just distal to the M ring. The L and P rings lie in the outer membrane and the periplasmic space, respectively.

It localises to the cell inner membrane. Its subcellular location is the bacterial flagellum basal body. The M ring may be actively involved in energy transduction. This chain is Flagellar M-ring protein (fliF), found in Salmonella typhimurium (strain LT2 / SGSC1412 / ATCC 700720).